Consider the following 395-residue polypeptide: S-adenosylmethionine synthase (395 aa).

ATP is bound at residue His-16. Residue Asp-18 coordinates Mg(2+). K(+) is bound at residue Glu-44. The L-methionine site is built by Glu-57 and Gln-100. The interval 100 to 110 (QSPDIAQGVDR) is flexible loop. Residues 167 to 169 (DAK), 233 to 234 (RF), Asp-242, 248 to 249 (RK), Ala-265, and Lys-269 contribute to the ATP site. L-methionine is bound at residue Asp-242. Lys-273 is an L-methionine binding site.

This sequence belongs to the AdoMet synthase family. Homotetramer; dimer of dimers. Requires Mg(2+) as cofactor. K(+) serves as cofactor.

Its subcellular location is the cytoplasm. It carries out the reaction L-methionine + ATP + H2O = S-adenosyl-L-methionine + phosphate + diphosphate. Its pathway is amino-acid biosynthesis; S-adenosyl-L-methionine biosynthesis; S-adenosyl-L-methionine from L-methionine: step 1/1. Functionally, catalyzes the formation of S-adenosylmethionine (AdoMet) from methionine and ATP. The overall synthetic reaction is composed of two sequential steps, AdoMet formation and the subsequent tripolyphosphate hydrolysis which occurs prior to release of AdoMet from the enzyme. This chain is S-adenosylmethionine synthase, found in Paraburkholderia phymatum (strain DSM 17167 / CIP 108236 / LMG 21445 / STM815) (Burkholderia phymatum).